The following is a 356-amino-acid chain: tRNA N6-adenosine threonylcarbamoyltransferase (356 aa).

The Fe cation site is built by His115 and His119. Substrate-binding positions include 139–143, Asp173, Gly186, Asp190, and Asn291; that span reads LVSGG. Asp319 serves as a coordination point for Fe cation.

The protein belongs to the KAE1 / TsaD family. The cofactor is Fe(2+).

The protein localises to the cytoplasm. It catalyses the reaction L-threonylcarbamoyladenylate + adenosine(37) in tRNA = N(6)-L-threonylcarbamoyladenosine(37) in tRNA + AMP + H(+). Required for the formation of a threonylcarbamoyl group on adenosine at position 37 (t(6)A37) in tRNAs that read codons beginning with adenine. Is involved in the transfer of the threonylcarbamoyl moiety of threonylcarbamoyl-AMP (TC-AMP) to the N6 group of A37, together with TsaE and TsaB. TsaD likely plays a direct catalytic role in this reaction. The polypeptide is tRNA N6-adenosine threonylcarbamoyltransferase (Arthrobacter sp. (strain FB24)).